Here is a 528-residue protein sequence, read N- to C-terminus: Cytochrome P450 monooxygenase lenC (528 aa).

A helical membrane pass occupies residues 5–27; it reads FVLPHPASMGASCILGLLLLTIL. Residue C469 coordinates heme.

This sequence belongs to the cytochrome P450 family. Heme is required as a cofactor.

The protein resides in the membrane. The protein operates within alkaloid biosynthesis. Its function is as follows. Nonribosomal peptide synthetase; part of the gene cluster that mediates the biosynthesis of the ergot alkaloids lentopeptins A and B. Within the pathway, lenC catalyzes the post-NRPS oxidative modification steps using as substrate the N-acyldiketopiperazine intermediate produced by the NRPS lenA. Lentopeptin A forms via a stereospecific hydroxylation, followed by a spontaneous bicyclic lactam core formation, while lentopeptin B is produced through an initial dehydrogenation, followed by a bicyclic lactam core formation and stereospecific hydration. The phenylalanine ammonia-lyase lenB provides the cinnamic acid starter unit to the NRPS lenA for the synthesis of the N-acyldiketopiperazine intermediate which in turn is converted into lentopeptins A and B by lenC. In Aspergillus lentulus, this protein is Cytochrome P450 monooxygenase lenC.